A 1121-amino-acid chain; its full sequence is Myelin transcription factor 1 (1121 aa).

Disordered regions lie at residues 1–156 (MSLE…SKGS) and 200–376 (EAAE…MTRG). A CCHHC-type 1 zinc finger spans residues 21–64 (PETTAADLSCPTPGCTGSGHVRGKYSRHRSLQSCPLAKKRKLEG). Cys30, Cys35, His48, and Cys54 together coordinate Zn(2+). The segment covering 41–50 (VRGKYSRHRS) has biased composition (basic residues). 2 stretches are compositionally biased toward basic and acidic residues: residues 62-71 (LEGAEAEHLV) and 123-132 (DEIHRPETAE). Positions 147–156 (GSATASSKGS) are enriched in low complexity. The span at 258-308 (EEEDEEEEEEEEEEEEDEEEEEEEEEEEEEEEEEEEEEEEEEEEEEEEEAA) shows a compositional bias: acidic residues. Positions 346 to 358 (VRSDDDKDEDTHS) are enriched in basic and acidic residues. 2 CCHHC-type zinc fingers span residues 433–476 (SRAE…PPEI) and 477–520 (LAMH…KLAK). Cys442, Cys447, His460, Cys466, Cys486, Cys491, His504, and Cys510 together coordinate Zn(2+). Disordered regions lie at residues 517-540 (KLAK…SNSD) and 668-774 (TLDL…EERK). Residues 526–540 (QPQTGDPSKSSSNSD) show a composition bias toward polar residues. Residues 705 to 723 (SSTSAPSSSMTSPQSSQAS) are compositionally biased toward low complexity. Basic and acidic residues predominate over residues 724–733 (RQDEWDRPLD). Acidic residues predominate over residues 759 to 770 (EADDQEVSEENF). 4 consecutive CCHHC-type zinc fingers follow at residues 791 to 834 (KDIK…LRNL), 835 to 878 (MAAH…GVKV), 884 to 927 (DKED…QKEG), and 937 to 980 (KSLK…GKKG). Zn(2+) is bound by residues Cys800, Cys805, His818, Cys824, Cys844, Cys849, His862, Cys868, Cys893, Cys898, His911, Cys917, Cys946, Cys951, His964, and Cys970.

It belongs to the MYT1 family. Interacts with STEAP3. As to expression, mostly in developing nervous system. Expressed in neural progenitors and oligodendrocyte lineage cells. More highly expressed in oligodendrocyte progenitors than in differentiated oligodendrocytes.

Its subcellular location is the nucleus. Its function is as follows. Binds to the promoter region of genes encoding proteolipid proteins of the central nervous system. May play a role in the development of neurons and oligodendroglia in the CNS. May regulate a critical transition point in oligodendrocyte lineage development by modulating oligodendrocyte progenitor proliferation relative to terminal differentiation and up-regulation of myelin gene transcription. The sequence is that of Myelin transcription factor 1 (MYT1) from Homo sapiens (Human).